Here is a 357-residue protein sequence, read N- to C-terminus: Protein RecA (357 aa).

67-74 (GPESSGKT) serves as a coordination point for ATP. The interval 334 to 357 (ELKPAAAGNSHDEDELAGEGKEEF) is disordered.

Belongs to the RecA family.

The protein resides in the cytoplasm. Its function is as follows. Can catalyze the hydrolysis of ATP in the presence of single-stranded DNA, the ATP-dependent uptake of single-stranded DNA by duplex DNA, and the ATP-dependent hybridization of homologous single-stranded DNAs. It interacts with LexA causing its activation and leading to its autocatalytic cleavage. In Pectobacterium atrosepticum (strain SCRI 1043 / ATCC BAA-672) (Erwinia carotovora subsp. atroseptica), this protein is Protein RecA.